Here is a 141-residue protein sequence, read N- to C-terminus: Heavy metal-associated isoprenylated plant protein 29 (141 aa).

The HMA domain occupies 1–59 (MEVPMDCPGCENKVRKALEKMNGVHDVQIDIKQQRVTVTGSAEQKKVLKVARNVTKRDI). Residues cysteine 7 and cysteine 10 each contribute to the a metal cation site. At cysteine 138 the chain carries Cysteine methyl ester. The S-farnesyl cysteine moiety is linked to residue cysteine 138. The propeptide at 139–141 (SIM) is removed in mature form.

The protein belongs to the HIPP family.

Functionally, heavy-metal-binding protein. The sequence is that of Heavy metal-associated isoprenylated plant protein 29 from Arabidopsis thaliana (Mouse-ear cress).